Consider the following 81-residue polypeptide: Adipogenin (81 aa).

The chain crosses the membrane as a helical span at residues 16–36 (FLASWLCLPVGLLLFLLIVWL).

This sequence belongs to the adipogenin family.

It localises to the membrane. The protein localises to the nucleus. Its function is as follows. Plays a role in stimulating adipocyte differentiation and development. The chain is Adipogenin from Sus scrofa (Pig).